Here is a 424-residue protein sequence, read N- to C-terminus: UPF0597 protein Shewmr7_2876 (424 aa).

This sequence belongs to the UPF0597 family.

This is UPF0597 protein Shewmr7_2876 from Shewanella sp. (strain MR-7).